A 300-amino-acid chain; its full sequence is Energy-coupling factor transporter ATP-binding protein EcfA2 (300 aa).

Positions 3–258 (IKAKNIVKIY…NKFLIENKML (256 aa)) constitute an ABC transporter domain. 40-47 (GQTGSGKT) lines the ATP pocket.

It belongs to the ABC transporter superfamily. Energy-coupling factor EcfA family. Forms a stable energy-coupling factor (ECF) transporter complex composed of 2 membrane-embedded substrate-binding proteins (S component), 2 ATP-binding proteins (A component) and 2 transmembrane proteins (T component).

The protein resides in the cell membrane. Functionally, ATP-binding (A) component of a common energy-coupling factor (ECF) ABC-transporter complex. Unlike classic ABC transporters this ECF transporter provides the energy necessary to transport a number of different substrates. In Mesomycoplasma hyopneumoniae (strain 232) (Mycoplasma hyopneumoniae), this protein is Energy-coupling factor transporter ATP-binding protein EcfA2.